A 79-amino-acid polypeptide reads, in one-letter code: MPKRVLQGVVISDKSDKTVVVKVERRYSHPLLKKTVRQSKNYKAHDENNQFKIGDQVSIQESRPISKDKCWIVVKDNVA.

Belongs to the universal ribosomal protein uS17 family. In terms of assembly, part of the 30S ribosomal subunit.

Its function is as follows. One of the primary rRNA binding proteins, it binds specifically to the 5'-end of 16S ribosomal RNA. The protein is Small ribosomal subunit protein uS17 of Bartonella tribocorum (strain CIP 105476 / IBS 506).